The following is a 963-amino-acid chain: SH3 domain-binding protein 4 (963 aa).

In terms of domain architecture, SH3 1 spans G55–Y114. S131, S246, S251, S279, and S296 each carry phosphoserine. The region spanning T317–V454 is the ZU5 domain. The residue at position 637 (S637) is a Phosphoserine. Positions S654 to R724 constitute an SH3 2 domain.

In terms of assembly, homodimer or homooligomer. Interacts with DNM2, EPS15, clathrin, the adapter protein complex 2/AP-2 and TFRC. Interacts with the Rag GTPases RRAGA, RRAGB, RRAGC and RRAGD; the interaction is most probably direct, preferentially occurs with their inactive GDP-bound form and is negatively regulated by amino acids. (Microbial infection) Interacts with molluscum contagiosum virus protein MC159L; this interaction is important for the suppression of autophagy. Phosphorylated upon EGF stimulation. Phosphorylation prevents interaction with DNM2. Expressed in all tissues tested with higher expression in pancreas. Expressed by retinal pigment epithelial cells (at protein level).

It localises to the membrane. The protein resides in the clathrin-coated pit. It is found in the cytoplasmic vesicle. The protein localises to the clathrin-coated vesicle. Its subcellular location is the nucleus. Its function is as follows. May function in transferrin receptor internalization at the plasma membrane through a cargo-specific control of clathrin-mediated endocytosis. Alternatively, may act as a negative regulator of the amino acid-induced TOR signaling by inhibiting the formation of active Rag GTPase complexes. Preferentially binds inactive Rag GTPase complexes and prevents their interaction with the mTORC1 complex inhibiting its relocalization to lysosomes and its activation. Thereby, may indirectly regulate cell growth, proliferation and autophagy. The protein is SH3 domain-binding protein 4 (SH3BP4) of Homo sapiens (Human).